The sequence spans 209 residues: NAD(P)H dehydrogenase (quinone) (209 aa).

The Flavodoxin-like domain maps to 4 to 199 (VNIIFYSMYG…AMARYQGRHV (196 aa)). FMN contacts are provided by residues 10 to 15 (SMYGHV) and 87 to 89 (TRY). Tyr12 serves as a coordination point for NAD(+). Trp107 serves as a coordination point for substrate. FMN contacts are provided by residues 122–128 (SSGTQHG) and His143.

It belongs to the WrbA family. Requires FMN as cofactor.

It catalyses the reaction a quinone + NADH + H(+) = a quinol + NAD(+). It carries out the reaction a quinone + NADPH + H(+) = a quinol + NADP(+). The chain is NAD(P)H dehydrogenase (quinone) from Methanosarcina acetivorans (strain ATCC 35395 / DSM 2834 / JCM 12185 / C2A).